Consider the following 940-residue polypeptide: Glutamate receptor 2.9 (940 aa).

The first 23 residues, 1–23, serve as a signal peptide directing secretion; the sequence is MKTNNTFLSYFVCGFLLMGVGLG. Residues 24–566 are Extracellular-facing; sequence QNQTSEIKVG…DTWVFLEPWS (543 aa). N-linked (GlcNAc...) asparagine glycosylation is found at Asn-25, Asn-39, Asn-115, Asn-338, Asn-345, and Asn-528. A helical transmembrane segment spans residues 567 to 587; that stretch reads LELWVTTGCFFVFIGFVVWLF. Over 588 to 596 the chain is Cytoplasmic; the sequence is EHRVNTDFR. A helical transmembrane segment spans residues 597–617; sequence GPPQYQIGTSLWFSFSTMVFA. Residues 618-628 are Cytoplasmic-facing; sequence HRENVVSNLAR. Residues 629–649 form a helical membrane-spanning segment; sequence FVVVVWCFVVLVLTQSYTASL. The Extracellular segment spans residues 650-811; that stretch reads TSFLTVQSLQ…NRLNLSSFLG (162 aa). Asn-771, Asn-776, and Asn-805 each carry an N-linked (GlcNAc...) asparagine glycan. The helical transmembrane segment at 812–832 threads the bilayer; that stretch reads LFLIAGTAISFSLLVFVALFL. Over 833–940 the chain is Cytoplasmic; the sequence is YEHRHTLGDD…ESDIECRVEQ (108 aa). Disordered regions lie at residues 876–900 and 914–940; these read ISSP…QSPS and PSEE…RVEQ.

Belongs to the glutamate-gated ion channel (TC 1.A.10.1) family. May form heteromers. In terms of tissue distribution, expressed predominantly in roots.

The protein localises to the membrane. Functionally, glutamate-gated receptor that probably acts as a non-selective cation channel. May be involved in light-signal transduction and calcium homeostasis via the regulation of calcium influx into cells. This is Glutamate receptor 2.9 (GLR2.9) from Arabidopsis thaliana (Mouse-ear cress).